Reading from the N-terminus, the 139-residue chain is ATP synthase epsilon chain (139 aa).

This sequence belongs to the ATPase epsilon chain family. As to quaternary structure, F-type ATPases have 2 components, CF(1) - the catalytic core - and CF(0) - the membrane proton channel. CF(1) has five subunits: alpha(3), beta(3), gamma(1), delta(1), epsilon(1). CF(0) has three main subunits: a, b and c.

It localises to the cell inner membrane. Produces ATP from ADP in the presence of a proton gradient across the membrane. This Pseudomonas putida (strain ATCC 47054 / DSM 6125 / CFBP 8728 / NCIMB 11950 / KT2440) protein is ATP synthase epsilon chain.